The chain runs to 515 residues: Bifunctional pantoate ligase/cytidylate kinase (515 aa).

The pantoate--beta-alanine ligase stretch occupies residues 1–279; sequence MKVVETVARL…VGSTRLIDNV (279 aa). ATP is bound at residue 31 to 38; the sequence is MGALHEGH. Histidine 38 acts as the Proton donor in catalysis. Residue glutamine 62 participates in (R)-pantoate binding. Glutamine 62 lines the beta-alanine pocket. 149–152 is a binding site for ATP; that stretch reads GQKD. Residue glutamine 155 coordinates (R)-pantoate. ATP contacts are provided by residues valine 178 and 186–189; that span reads LSSR. The segment at 280–515 is cytidylate kinase; sequence VLGQHHERRP…LYRDKVGGSV (236 aa).

It in the N-terminal section; belongs to the pantothenate synthetase family. The protein in the C-terminal section; belongs to the cytidylate kinase family. Type 1 subfamily.

It localises to the cytoplasm. It catalyses the reaction (R)-pantoate + beta-alanine + ATP = (R)-pantothenate + AMP + diphosphate + H(+). It carries out the reaction CMP + ATP = CDP + ADP. The enzyme catalyses dCMP + ATP = dCDP + ADP. Its pathway is cofactor biosynthesis; (R)-pantothenate biosynthesis; (R)-pantothenate from (R)-pantoate and beta-alanine: step 1/1. In terms of biological role, catalyzes the condensation of pantoate with beta-alanine in an ATP-dependent reaction via a pantoyl-adenylate intermediate. Functionally, catalyzes the transfer of a phosphate group from ATP to either CMP or dCMP to form CDP or dCDP and ADP, respectively. This Gloeobacter violaceus (strain ATCC 29082 / PCC 7421) protein is Bifunctional pantoate ligase/cytidylate kinase.